A 189-amino-acid polypeptide reads, in one-letter code: Chitin synthase 1 (189 aa).

Belongs to the chitin synthase family.

The protein localises to the cell membrane. The catalysed reaction is [(1-&gt;4)-N-acetyl-beta-D-glucosaminyl](n) + UDP-N-acetyl-alpha-D-glucosamine = [(1-&gt;4)-N-acetyl-beta-D-glucosaminyl](n+1) + UDP + H(+). Polymerizes chitin, a structural polymer of the cell wall and septum, by transferring the sugar moiety of UDP-GlcNAc to the non-reducing end of the growing chitin polymer. The sequence is that of Chitin synthase 1 (CHS1) from Xylohypha bantiana.